Consider the following 367-residue polypeptide: 2-aminoethylphosphonate--pyruvate transaminase (367 aa).

Lys-194 carries the post-translational modification N6-(pyridoxal phosphate)lysine.

This sequence belongs to the class-V pyridoxal-phosphate-dependent aminotransferase family. PhnW subfamily. In terms of assembly, homodimer. Requires pyridoxal 5'-phosphate as cofactor.

It catalyses the reaction (2-aminoethyl)phosphonate + pyruvate = phosphonoacetaldehyde + L-alanine. Involved in phosphonate degradation. The polypeptide is 2-aminoethylphosphonate--pyruvate transaminase (Salmonella heidelberg (strain SL476)).